Reading from the N-terminus, the 360-residue chain is DNA replication and repair protein RecF (360 aa).

30 to 37 (GENGAGKT) is an ATP binding site.

This sequence belongs to the RecF family.

The protein resides in the cytoplasm. Its function is as follows. The RecF protein is involved in DNA metabolism; it is required for DNA replication and normal SOS inducibility. RecF binds preferentially to single-stranded, linear DNA. It also seems to bind ATP. This chain is DNA replication and repair protein RecF, found in Deinococcus deserti (strain DSM 17065 / CIP 109153 / LMG 22923 / VCD115).